The following is a 318-amino-acid chain: Dehydration-responsive element-binding protein 2E (318 aa).

Over residues 1–15 the composition is skewed to basic residues; sequence MESYGRKRAWKKGPT. The disordered stretch occupies residues 1–24; sequence MESYGRKRAWKKGPTRGKGGPQNA. The segment at residues 27 to 84 is a DNA-binding region (AP2/ERF); that stretch reads EYRGVRQRTWGKWVAEIREPNKRTRLWLGSFATAEEAALAYDEAARRLYGPDAFLNLP. A disordered region spans residues 140–178; it reads ELKNSSSSPTKPPPRTPTRANPPPPPLPTSSPCSTVTNS. A compositionally biased stretch (pro residues) spans 149-168; sequence TKPPPRTPTRANPPPPPLPT.

Belongs to the AP2/ERF transcription factor family. ERF subfamily.

The protein localises to the nucleus. Functionally, probable transcriptional activator that binds to the DNA sequence 5'-[AG]CCGAC-3' of the cis-acting dehydration-responsive element (DRE). The protein is Dehydration-responsive element-binding protein 2E (DREB2E) of Oryza sativa subsp. japonica (Rice).